A 154-amino-acid chain; its full sequence is Large ribosomal subunit protein bL19 (154 aa).

The interval 1–33 (MAADPKDTTVTDENTETAATAEVETVASAPTSP) is disordered. Low complexity predominate over residues 16–27 (ETAATAEVETVA).

It belongs to the bacterial ribosomal protein bL19 family.

In terms of biological role, this protein is located at the 30S-50S ribosomal subunit interface and may play a role in the structure and function of the aminoacyl-tRNA binding site. This is Large ribosomal subunit protein bL19 from Parasynechococcus marenigrum (strain WH8102).